The following is a 204-amino-acid chain: Colicin-A (204 aa).

A run of 2 helical transmembrane segments spans residues 139–161 (SWVL…LGAY) and 165–187 (LGVP…GALI).

Belongs to the channel forming colicin family.

The protein resides in the cell membrane. This colicin is a channel-forming colicin. This class of transmembrane toxins depolarize the cytoplasmic membrane, leading to dissipation of cellular energy. In terms of biological role, colicins are polypeptide toxins produced by and active against E.coli and closely related bacteria. The protein is Colicin-A (caa) of Escherichia coli.